The chain runs to 371 residues: Nuclear hormone receptor family member nhr-51 (371 aa).

The nuclear receptor DNA-binding region spans 2–77; it reads NKNCLICHRK…MGMQAFPRRV (76 aa). NR C4-type zinc fingers lie at residues 5 to 25 and 41 to 60; these read CLICHRKAAGQHYGVLSCFAC and CQKFNKCYEKFIILPKCKAC. The region spanning 98 to 337 is the NR LBD domain; it reads MDEQRHWRML…KQLVTDTFVD (240 aa).

The protein belongs to the nuclear hormone receptor family.

The protein resides in the nucleus. Its function is as follows. Orphan nuclear receptor. In Caenorhabditis elegans, this protein is Nuclear hormone receptor family member nhr-51 (nhr-51).